Here is an 86-residue protein sequence, read N- to C-terminus: Parvalbumin beta 3 (86 aa).

A1 is subject to N-acetylalanine. In terms of domain architecture, EF-hand spans 35-70 (LSPEEVKKFFAIIDQDHSGFIEEEELKLFLQTFSAG). Residues D48, D50, S52, F54, E56, and E59 each coordinate Ca(2+).

This sequence belongs to the parvalbumin family.

Functionally, in muscle, parvalbumin is thought to be involved in relaxation after contraction. It binds two calcium ions. The protein is Parvalbumin beta 3 of Merluccius hubbsi (Argentine hake).